A 136-amino-acid chain; its full sequence is Large ribosomal subunit protein uL16c (136 aa).

Belongs to the universal ribosomal protein uL16 family. Part of the 50S ribosomal subunit.

The protein localises to the plastid. It is found in the chloroplast. The protein is Large ribosomal subunit protein uL16c of Phaseolus angularis (Azuki bean).